The chain runs to 236 residues: Eukaryotic translation initiation factor 3 subunit K (236 aa).

The PCI domain maps to 48-218; sequence CDCNANRTLL…EAKKAEIRED (171 aa).

The protein belongs to the eIF-3 subunit K family.

It localises to the cytoplasm. Its function is as follows. Component of the eukaryotic translation initiation factor 3 (eIF-3) complex, which is involved in protein synthesis of a specialized repertoire of mRNAs and, together with other initiation factors, stimulates binding of mRNA and methionyl-tRNAi to the 40S ribosome. The eIF-3 complex specifically targets and initiates translation of a subset of mRNAs involved in cell proliferation. This Pyricularia oryzae (strain Y34) (Rice blast fungus) protein is Eukaryotic translation initiation factor 3 subunit K.